Here is a 440-residue protein sequence, read N- to C-terminus: Damage-control phosphatase ARMT1 (440 aa).

The Mn(2+) site is built by Asp-252 and Asn-253. 252–253 (DN) is a substrate binding site. S-adenosyl-L-methionine-binding residues include Glu-257 and Asp-290. Asp-290 serves as a coordination point for Mn(2+). Residues 366 to 370 (DLNYR) and Lys-403 each bind substrate. The Subfamily III RTxK motif motif lies at 400 to 403 (RTLK).

This sequence belongs to the damage-control phosphatase family. Sugar phosphate phosphatase III subfamily. Mn(2+) serves as cofactor. The cofactor is Ni(2+). Automethylated.

It carries out the reaction beta-D-fructose 1-phosphate + H2O = D-fructose + phosphate. The catalysed reaction is beta-D-fructose 6-phosphate = dihydroxyacetone + D-glyceraldehyde 3-phosphate. The enzyme catalyses L-glutamyl-[protein] + S-adenosyl-L-methionine = [protein]-L-glutamate 5-O-methyl ester + S-adenosyl-L-homocysteine. Metal-dependent phosphatase that shows phosphatase activity against several substrates, including fructose-1-phosphate and fructose-6-phosphate. Its preference for fructose-1-phosphate, a strong glycating agent that causes DNA damage rather than a canonical yeast metabolite, suggests a damage-control function in hexose phosphate metabolism. Has also been shown to have O-methyltransferase activity that methylates glutamate residues of target proteins to form gamma-glutamyl methyl ester residues. Possibly methylates PCNA, suggesting it is involved in the DNA damage response. The polypeptide is Damage-control phosphatase ARMT1 (Xenopus tropicalis (Western clawed frog)).